Reading from the N-terminus, the 282-residue chain is NADPH-dependent 7-cyano-7-deazaguanine reductase (282 aa).

88 to 90 (IES) provides a ligand contact to substrate. 90-91 (SK) lines the NADPH pocket. Cys-190 (thioimide intermediate) is an active-site residue. Asp-197 (proton donor) is an active-site residue. Residue 229 to 230 (HE) participates in substrate binding. Position 258–259 (258–259 (RG)) interacts with NADPH.

This sequence belongs to the GTP cyclohydrolase I family. QueF type 2 subfamily. As to quaternary structure, homodimer.

The protein localises to the cytoplasm. The enzyme catalyses 7-aminomethyl-7-carbaguanine + 2 NADP(+) = 7-cyano-7-deazaguanine + 2 NADPH + 3 H(+). The protein operates within tRNA modification; tRNA-queuosine biosynthesis. Functionally, catalyzes the NADPH-dependent reduction of 7-cyano-7-deazaguanine (preQ0) to 7-aminomethyl-7-deazaguanine (preQ1). The protein is NADPH-dependent 7-cyano-7-deazaguanine reductase of Escherichia coli (strain UTI89 / UPEC).